We begin with the raw amino-acid sequence, 938 residues long: LPS-assembly protein LptD (938 aa).

The N-terminal stretch at 1–33 (MAVKHPAFRKKFPLLVTGSLLALQPAFSLQSFA) is a signal peptide. The disordered stretch occupies residues 52 to 96 (KTATSALPPRPQHSRSAVSTTSGSATATATKQEPAPVLVTESKGR). Residues 65–81 (SRSAVSTTSGSATATAT) are compositionally biased toward low complexity.

This sequence belongs to the LptD family. Component of the lipopolysaccharide transport and assembly complex. Interacts with LptE and LptA.

It localises to the cell outer membrane. Together with LptE, is involved in the assembly of lipopolysaccharide (LPS) at the surface of the outer membrane. The protein is LPS-assembly protein LptD of Ectopseudomonas mendocina (strain ymp) (Pseudomonas mendocina).